The following is a 75-amino-acid chain: MSKTITIADDVYYELVKMKGKRSFSEVLRELIGKKKEGNLDVLMIAFGTMDEEEAKELEEKIKEVGKWLNSWTPV.

Belongs to the UPF0330 family.

Its function is as follows. Possibly the antitoxin component of a type II toxin-antitoxin (TA) system. This is Putative antitoxin PH1062.1 from Pyrococcus horikoshii (strain ATCC 700860 / DSM 12428 / JCM 9974 / NBRC 100139 / OT-3).